The following is a 246-amino-acid chain: Transcription factor MYB13 (246 aa).

2 consecutive HTH myb-type domains span residues 9–61 and 62–116; these read KIGL…INYL and RPDI…KKRL. 2 DNA-binding regions (H-T-H motif) span residues 37 to 61 and 89 to 112; these read WRALPKLAGLLRCGKSCRLRWINYL and WSAIAAKLPGRTDNEIKNVWHTHL.

In terms of tissue distribution, expressed in roots and flowers. Expressed in shoot apex, axillary buds, at the basis of flowers and branching points of inflorescences.

It is found in the nucleus. Plays a regulatory role in meristem function. Functions as component of a regulatory network controlling the establishment and/or development of the shoot system by the regulation of apical meristem function. May play a role in tolerance to boric acid. This chain is Transcription factor MYB13, found in Arabidopsis thaliana (Mouse-ear cress).